Reading from the N-terminus, the 389-residue chain is Probable L-tyrosine/L-aspartate decarboxylase (389 aa).

Lys233 bears the N6-(pyridoxal phosphate)lysine mark.

This sequence belongs to the group II decarboxylase family. MfnA subfamily. Requires pyridoxal 5'-phosphate as cofactor.

The enzyme catalyses L-tyrosine + H(+) = tyramine + CO2. The catalysed reaction is L-aspartate + H(+) = beta-alanine + CO2. The protein operates within cofactor biosynthesis; methanofuran biosynthesis. It functions in the pathway cofactor biosynthesis; coenzyme A biosynthesis. In terms of biological role, catalyzes the decarboxylation of L-tyrosine to produce tyramine for methanofuran biosynthesis. Can also catalyze the decarboxylation of L-aspartate to produce beta-alanine for coenzyme A (CoA) biosynthesis. The sequence is that of Probable L-tyrosine/L-aspartate decarboxylase from Methanosphaera stadtmanae (strain ATCC 43021 / DSM 3091 / JCM 11832 / MCB-3).